A 440-amino-acid chain; its full sequence is MSTSHASPRETTEGTVYTVTGGDWDEVVQSAARADDERIVVNMGPQHPSTHGVLRLILEIDGETVTEARCGIGYLHTGIEKNLEYRTWTQGTTFVTRMDYLTPFFNEAAYCLGVEKLLGIDDQIPDRATIIRVLLMELNRLSSHLVAIATGGMELGATTIMIYGFRDRELILDIYELITGLRMNHAYIRPGGLAQDLPPGAVDQIREFVKKMNKNLPEYDKLATGNPIFKARMQDVGYLDLAGCMALGATGPVLRSTGLPHDLRKTQPYCGYETYDFDVPTADTCDSYGRFLIRLEEMRQSLRIVEQCLDRLQPGPVMVADKKIAWPAQLALGPDGLGNSLDHIKKIMGTSMEALIHHFKLVTEGFRVPPAQVYTAVESPKGELGVHVVSDGGTRPFRVHFRDPSFTNLQAMAAMCEGGQVADVIVAVASIDPVMGGVDR.

It belongs to the complex I 49 kDa subunit family. As to quaternary structure, NDH-1 is composed of 14 different subunits. Subunits NuoB, C, D, E, F, and G constitute the peripheral sector of the complex.

It localises to the cell membrane. It carries out the reaction a quinone + NADH + 5 H(+)(in) = a quinol + NAD(+) + 4 H(+)(out). NDH-1 shuttles electrons from NADH, via FMN and iron-sulfur (Fe-S) centers, to quinones in the respiratory chain. The immediate electron acceptor for the enzyme in this species is believed to be a menaquinone. Couples the redox reaction to proton translocation (for every two electrons transferred, four hydrogen ions are translocated across the cytoplasmic membrane), and thus conserves the redox energy in a proton gradient. The polypeptide is NADH-quinone oxidoreductase subunit D 2 (Streptomyces coelicolor (strain ATCC BAA-471 / A3(2) / M145)).